The chain runs to 242 residues: Probable porphobilinogen deaminase (242 aa).

This sequence belongs to the HMBS family.

It carries out the reaction 4 porphobilinogen + H2O = hydroxymethylbilane + 4 NH4(+). It participates in porphyrin-containing compound metabolism; protoporphyrin-IX biosynthesis; coproporphyrinogen-III from 5-aminolevulinate: step 2/4. Functionally, tetrapolymerization of the monopyrrole PBG into the hydroxymethylbilane pre-uroporphyrinogen in several discrete steps. This is Probable porphobilinogen deaminase (hemC) from Chlamydia muridarum (strain MoPn / Nigg).